The following is a 178-amino-acid chain: Large ribosomal subunit protein uL6 (178 aa).

Belongs to the universal ribosomal protein uL6 family. As to quaternary structure, part of the 50S ribosomal subunit.

In terms of biological role, this protein binds to the 23S rRNA, and is important in its secondary structure. It is located near the subunit interface in the base of the L7/L12 stalk, and near the tRNA binding site of the peptidyltransferase center. This Streptococcus pneumoniae (strain ATCC 700669 / Spain 23F-1) protein is Large ribosomal subunit protein uL6.